The sequence spans 555 residues: CTP synthase (555 aa).

Residues 1-270 (MTKFVFVTGG…DGLICDKLRL (270 aa)) form an amidoligase domain region. A CTP-binding site is contributed by Ser13. Position 13 (Ser13) interacts with UTP. ATP is bound by residues 14–19 (SLGKGI) and Asp71. 2 residues coordinate Mg(2+): Asp71 and Glu144. CTP-binding positions include 151 to 153 (DIE), 191 to 196 (KTKPTQ), and Lys227. UTP is bound by residues 191–196 (KTKPTQ) and Lys227. The Glutamine amidotransferase type-1 domain occupies 295 to 547 (NIVMVGKYVE…IKAALDHQAA (253 aa)). Residue Gly356 participates in L-glutamine binding. The active-site Nucleophile; for glutamine hydrolysis is Cys383. Residues 384-387 (LGMQ), Glu407, and Arg473 each bind L-glutamine. Active-site residues include His520 and Glu522.

The protein belongs to the CTP synthase family. As to quaternary structure, homotetramer.

The enzyme catalyses UTP + L-glutamine + ATP + H2O = CTP + L-glutamate + ADP + phosphate + 2 H(+). The catalysed reaction is L-glutamine + H2O = L-glutamate + NH4(+). It carries out the reaction UTP + NH4(+) + ATP = CTP + ADP + phosphate + 2 H(+). The protein operates within pyrimidine metabolism; CTP biosynthesis via de novo pathway; CTP from UDP: step 2/2. With respect to regulation, allosterically activated by GTP, when glutamine is the substrate; GTP has no effect on the reaction when ammonia is the substrate. The allosteric effector GTP functions by stabilizing the protein conformation that binds the tetrahedral intermediate(s) formed during glutamine hydrolysis. Inhibited by the product CTP, via allosteric rather than competitive inhibition. In terms of biological role, catalyzes the ATP-dependent amination of UTP to CTP with either L-glutamine or ammonia as the source of nitrogen. Regulates intracellular CTP levels through interactions with the four ribonucleotide triphosphates. This Albidiferax ferrireducens (strain ATCC BAA-621 / DSM 15236 / T118) (Rhodoferax ferrireducens) protein is CTP synthase.